The primary structure comprises 278 residues: Undecaprenyl-diphosphatase 1 (278 aa).

7 helical membrane passes run 1–21, 43–63, 83–103, 112–132, 192–212, 224–244, and 257–277; these read MFFG…TEFL, AFTT…VVLL, IWAT…IGFL, LMNW…FIFI, FSFF…IGSY, IVIL…VIKW, and FGWY…IGII.

It belongs to the UppP family.

The protein localises to the cell membrane. The catalysed reaction is di-trans,octa-cis-undecaprenyl diphosphate + H2O = di-trans,octa-cis-undecaprenyl phosphate + phosphate + H(+). In terms of biological role, catalyzes the dephosphorylation of undecaprenyl diphosphate (UPP). Confers resistance to bacitracin. The polypeptide is Undecaprenyl-diphosphatase 1 (Oenococcus oeni (strain ATCC BAA-331 / PSU-1)).